Consider the following 266-residue polypeptide: MAERQNIFFYYHPDEEMDGKVKALKKISSENGLNVVENSSDASIIVSIGGDGTFLQAVRKTGFRQDCIYTGIMREGQSGLYCDFNIDNFDNMIHSVLHEDLEVRRFPTIKVQINGETPFYCLNEVSIRSTIVKTIVINVCVDGFHFETFRGDGMIVSTPTGSTGYSKSARGAVIDPLIHGFQVSEVASLNNNQYRTLGSSFLLNKDRKLELEILQDGNDHPIISLDNEASPIKRIQNIDVTMDETIIKTVKLKNNSYWERVKRTFL.

Catalysis depends on aspartate 51, which acts as the Proton acceptor. Residues 51–52, 123–124, arginine 150, aspartate 152, 163–168, and alanine 187 contribute to the NAD(+) site; these read DG, NE, and TGYSKS.

The protein belongs to the NAD kinase family. Requires a divalent metal cation as cofactor.

It is found in the cytoplasm. The catalysed reaction is NAD(+) + ATP = ADP + NADP(+) + H(+). Involved in the regulation of the intracellular balance of NAD and NADP, and is a key enzyme in the biosynthesis of NADP. Catalyzes specifically the phosphorylation on 2'-hydroxyl of the adenosine moiety of NAD to yield NADP. This Oceanobacillus iheyensis (strain DSM 14371 / CIP 107618 / JCM 11309 / KCTC 3954 / HTE831) protein is NAD kinase 2.